A 619-amino-acid polypeptide reads, in one-letter code: Protein DFG16 (619 aa).

M1 is a topological domain (extracellular). A helical transmembrane segment spans residues 2-22 (IIRLHFYYLLTLVYHLGLVGA). The Cytoplasmic segment spans residues 23-167 (YEKAARKRIQ…KDPFPLGMIM (145 aa)). A disordered region spans residues 33–54 (PPDLIPGPPGHKLGDERPPHYD). Over residues 44-54 (KLGDERPPHYD) the composition is skewed to basic and acidic residues. The helical transmembrane segment at 168 to 188 (ITFASGCICVATWMLFLVVLL) threads the bilayer. Topologically, residues 189–203 (LPSDNHNRRNKVVHV) are extracellular. A helical membrane pass occupies residues 204 to 224 (YVLFSAIIRTVFLNETIAVIF). The Cytoplasmic portion of the chain corresponds to 225–291 (DSQYHDDYQD…IPFKMKKGTH (67 aa)). Residues 292–312 (IIITVGCFLSLADNILFANLL) traverse the membrane as a helical segment. The Extracellular segment spans residues 313–321 (WRKNLVVLK). The helical transmembrane segment at 322–342 (VFYKLIELLIYTIFISIICYF) threads the bilayer. Topologically, residues 343-378 (TWHNFAYILLPKTAEINTDGKCKTKLRILWENYHET) are cytoplasmic. The helical transmembrane segment at 379-399 (IPLLAYNILIFILFYFTTIFF) threads the bilayer. At 400 to 410 (AAFTKHVRGWT) the chain is on the extracellular side. A helical membrane pass occupies residues 411–431 (FNFVHLLKVLITVNVWGLIGV). Residues 432–619 (LEKRELHISK…NHIYNYENSD (188 aa)) lie on the Cytoplasmic side of the membrane. 2 stretches are compositionally biased toward polar residues: residues 485-504 (KSNT…SPTW) and 526-549 (KFGQ…TLSK). Disordered stretches follow at residues 485–506 (KSNT…TWKS) and 520–586 (IMKS…ADKH). Residues 552–561 (QLLRKPRRKT) show a composition bias toward basic residues.

It localises to the membrane. Its function is as follows. Involved in invasion during filamentous growth. In Saccharomyces cerevisiae (strain ATCC 204508 / S288c) (Baker's yeast), this protein is Protein DFG16 (DFG16).